Here is a 371-residue protein sequence, read N- to C-terminus: DNA replication and repair protein RecF (371 aa).

ATP is bound at residue 30-37; it reads GSNGQGKT.

It belongs to the RecF family.

The protein resides in the cytoplasm. The RecF protein is involved in DNA metabolism; it is required for DNA replication and normal SOS inducibility. RecF binds preferentially to single-stranded, linear DNA. It also seems to bind ATP. In Acidothermus cellulolyticus (strain ATCC 43068 / DSM 8971 / 11B), this protein is DNA replication and repair protein RecF.